Here is a 55-residue protein sequence, read N- to C-terminus: Large ribosomal subunit protein bL33 (55 aa).

Residues 1-11 (MAKGSREKIKL) show a composition bias toward basic and acidic residues. Positions 1–32 (MAKGSREKIKLESSASTGHFYTTSKNKRTKPE) are disordered. The span at 13–24 (SSASTGHFYTTS) shows a compositional bias: polar residues.

This sequence belongs to the bacterial ribosomal protein bL33 family.

The chain is Large ribosomal subunit protein bL33 from Polynucleobacter necessarius subsp. necessarius (strain STIR1).